The following is a 417-amino-acid chain: MAAVCSGNAVPVWLSEDDLSCIICQGLLDQPTTLPCGHSFCLRCLHDLWVSKRGAVDGCPWACPICRKGPLTKPKLHKNPLLQDLVDKYLQAAREVEAGSEPEPAPAPRSAPQVTVQKSTTNVIQELTDMVRQLVDDVKSLQTQRPNLGSGQDNAQGTPPTDSSSEGEHSLDSPKLVTFSISQKKIQEILHNLEEIQEKLQGSVPGRAPPRERVQEMTSSLCLLPDQRRPAPRKASHLSLWAISPTFDLRTLSYNLEVSNNSRRVTVSRGDLHTYHWSPQRFSISQVFCSQALSSGQKYWEVDTRNCSHWAIGVASWGMKRDGMLGRTMDSWCIEWRGPGQFSAWAKMKKTDLQSDLPEVVGVWLDLESGELAFYAVADHERLLYECEVSSSSPLHPAFWLYGLSPGNYLEIKQLNT.

The segment at 21-67 (CIICQGLLDQPTTLPCGHSFCLRCLHDLWVSKRGAVDGCPWACPICR) adopts an RING-type zinc-finger fold. Disordered stretches follow at residues 95–118 (EVEAGSEPEPAPAPRSAPQVTVQK) and 143–173 (TQRPNLGSGQDNAQGTPPTDSSSEGEHSLDS). Coiled coils occupy residues 121-145 (TNVIQELTDMVRQLVDDVKSLQTQR) and 180-204 (SISQKKIQEILHNLEEIQEKLQGSV). Polar residues predominate over residues 143–164 (TQRPNLGSGQDNAQGTPPTDSS). In terms of domain architecture, B30.2/SPRY spans 225–417 (PDQRRPAPRK…NYLEIKQLNT (193 aa)).

In terms of assembly, homodimer. Interacts (homodimer) with RIGI (double-stranded RNA-bound oligomeric form); involved in both RIGI ubiquitination, oligomerization into filaments associated with viral RNAs and the bridging of these filaments. Interacts with UBE2D3 and UBE2N; E2 ubiquitin ligases involved in RNF135-mediated ubiquitination of RIGI and activation of the RIG-I signaling pathway. Interacts with PCBP2. In terms of tissue distribution, ubiquitously expressed.

It localises to the cytoplasm. The protein localises to the stress granule. The catalysed reaction is S-ubiquitinyl-[E2 ubiquitin-conjugating enzyme]-L-cysteine + [acceptor protein]-L-lysine = [E2 ubiquitin-conjugating enzyme]-L-cysteine + N(6)-ubiquitinyl-[acceptor protein]-L-lysine.. It participates in protein modification; protein ubiquitination. Functionally, E2-dependent E3 ubiquitin-protein ligase that functions as a RIGI coreceptor in the sensing of viral RNAs in cell cytoplasm and the activation of the antiviral innate immune response. Together with the UBE2D3, UBE2N and UB2V1 E2 ligases, catalyzes the 'Lys-63'-linked polyubiquitination of RIGI oligomerized on viral RNAs, an essential step in the activation of the RIG-I signaling pathway. Through a ubiquitin-independent parallel mechanism, which consists in bridging RIGI filaments forming on longer viral RNAs, further activates the RIG-I signaling pathway. This second mechanism that synergizes with the ubiquitin-dependent one would thereby allow an RNA length-dependent regulation of the RIG-I signaling pathway. Associated with the E2 ligase UBE2N, also constitutively synthesizes unanchored 'Lys-63'-linked polyubiquitin chains that may also activate the RIG-I signaling pathway. It is not involved in the innate immune response against DNA viruses. The chain is E3 ubiquitin-protein ligase RNF135 from Mus musculus (Mouse).